A 343-amino-acid polypeptide reads, in one-letter code: MAYFALGLATATKNRDGKIIEAFFPTPILAPSDALVAALAPIAGYQEGNQALDITAAQSAQLAAVFAAHQQAASAAFADKAANAKQPLVLVILASDDKPQSVAEGYLKLQLISHRLVKPHGTVLDGIFGLLHNIAWTNEGPIDLPELAERQIEARLAGRVLTVDCVDKFPKMVDYVVPAGIRIADTSRVRLGAHVGEGTTVMHEGFINFNAGTTGVSMVEGRISAGVVVGNGSDIGGGASIMGTLSGGGKVVVSIGENSLLGANAGLGFPLGDRCTVESGLYVTAGTKVRTLDKDGNQVDIVKARDLAGVSDLLFRRNSLTGQIECLANKSAVELNSELHKNN.

E204 contacts Mg(2+). E220 acts as the Acyl-anhydride intermediate in catalysis. Residues R222, G237, S240, A263, 278-279, G286, K303, and 316-319 each bind succinyl-CoA; these read ES and RRNS.

Belongs to the type 2 tetrahydrodipicolinate N-succinyltransferase family. As to quaternary structure, homotrimer.

The protein resides in the cytoplasm. It catalyses the reaction (S)-2,3,4,5-tetrahydrodipicolinate + succinyl-CoA + H2O = (S)-2-succinylamino-6-oxoheptanedioate + CoA. It participates in amino-acid biosynthesis; L-lysine biosynthesis via DAP pathway; LL-2,6-diaminopimelate from (S)-tetrahydrodipicolinate (succinylase route): step 1/3. Functionally, catalyzes the conversion of the cyclic tetrahydrodipicolinate (THDP) into the acyclic N-succinyl-L-2-amino-6-oxopimelate using succinyl-CoA. The polypeptide is 2,3,4,5-tetrahydropyridine-2,6-dicarboxylate N-succinyltransferase (Vibrio cholerae serotype O1 (strain ATCC 39315 / El Tor Inaba N16961)).